Reading from the N-terminus, the 744-residue chain is Tripartite motif-containing protein 2 (744 aa).

Ser-10 carries the phosphoserine modification. Residues Cys-23–Arg-64 form an RING-type zinc finger. The B box-type zinc-finger motif lies at Gly-113–Leu-154. Residues Cys-118, His-121, Cys-141, and His-146 each coordinate Zn(2+). One copy of the Filamin repeat lies at Thr-320–Val-421. Phosphothreonine is present on Thr-371. 3 positions are modified to phosphoserine: Ser-375, Ser-424, and Ser-428. The tract at residues Glu-432–Lys-462 is disordered. 6 NHL repeats span residues Ile-473 to Asp-516, Lys-520 to Asp-563, Gly-564 to Asn-605, Val-609 to Glu-652, Met-656 to Ser-699, and Gly-700 to Leu-743.

The protein belongs to the TRIM/RBCC family. In terms of assembly, forms homooligomers. Interacts with TRIM3; this interaction reduces TRIM2 activity. Interacts with myosin V; myosin V may not be a substrate for ubiquitination. Interacts with NEFL. Interacts with phosphorylated BCL2L11. Interacts with SIRPA. In terms of processing, RING-type zinc finger-dependent and UBE2D1-dependent autoubiquitination.

The catalysed reaction is S-ubiquitinyl-[E2 ubiquitin-conjugating enzyme]-L-cysteine + [acceptor protein]-L-lysine = [E2 ubiquitin-conjugating enzyme]-L-cysteine + N(6)-ubiquitinyl-[acceptor protein]-L-lysine.. Its pathway is protein modification; protein ubiquitination. Its function is as follows. UBE2D1-dependent E3 ubiquitin-protein ligase that mediates the ubiquitination of NEFL and of phosphorylated BCL2L11. Plays a neuroprotective function. May play a role in neuronal rapid ischemic tolerance. Plays a role in antiviral immunity and limits New World arenavirus infection independently of its ubiquitin ligase activity. This Rattus norvegicus (Rat) protein is Tripartite motif-containing protein 2 (Trim2).